Reading from the N-terminus, the 414-residue chain is 3-oxo-tetronate kinase (414 aa).

ATP is bound by residues S255, 355 to 358, and G398; that span reads GGET.

Belongs to the four-carbon acid sugar kinase family.

The enzyme catalyses 3-dehydro-L-erythronate + ATP = 3-dehydro-4-O-phospho-L-erythronate + ADP + H(+). The catalysed reaction is 3-dehydro-D-erythronate + ATP = 3-dehydro-4-O-phospho-D-erythronate + ADP + H(+). Catalyzes the ATP-dependent phosphorylation of 3-oxo-tetronate to 3-oxo-tetronate 4-phosphate. The sequence is that of 3-oxo-tetronate kinase from Actinobacillus succinogenes (strain ATCC 55618 / DSM 22257 / CCUG 43843 / 130Z).